Reading from the N-terminus, the 104-residue chain is N(4)-acetylcytidine amidohydrolase (104 aa).

The 87-residue stretch at 7 to 93 (MTFFSRFEAD…EVIQEIYPGI (87 aa)) folds into the ASCH domain. K22 functions as the Proton acceptor in the catalytic mechanism. The active-site Nucleophile is the T25. E75 acts as the Proton donor in catalysis.

This sequence belongs to the N(4)-acetylcytidine amidohydrolase family.

It carries out the reaction N(4)-acetylcytidine + H2O = cytidine + acetate + H(+). The enzyme catalyses N(4)-acetyl-2'-deoxycytidine + H2O = 2'-deoxycytidine + acetate + H(+). The catalysed reaction is N(4)-acetylcytosine + H2O = cytosine + acetate + H(+). Catalyzes the hydrolysis of N(4)-acetylcytidine (ac4C). This chain is N(4)-acetylcytidine amidohydrolase, found in Vibrio vulnificus (strain CMCP6).